A 160-amino-acid chain; its full sequence is Transcription antitermination protein NusB (160 aa).

This sequence belongs to the NusB family.

Its function is as follows. Involved in transcription antitermination. Required for transcription of ribosomal RNA (rRNA) genes. Binds specifically to the boxA antiterminator sequence of the ribosomal RNA (rrn) operons. The protein is Transcription antitermination protein NusB of Rhizobium etli (strain ATCC 51251 / DSM 11541 / JCM 21823 / NBRC 15573 / CFN 42).